The primary structure comprises 265 residues: Undecaprenyl-diphosphatase (265 aa).

The next 7 helical transmembrane spans lie at 38–58, 80–100, 107–127, 135–155, 178–198, 216–236, and 244–264; these read SDMF…IIYW, LIVA…LGFE, PIAW…WAAA, ITWL…VFPG, TEFA…YELL, IAFV…LAYI, and FAIY…TGLI.

Belongs to the UppP family.

Its subcellular location is the cell inner membrane. It carries out the reaction di-trans,octa-cis-undecaprenyl diphosphate + H2O = di-trans,octa-cis-undecaprenyl phosphate + phosphate + H(+). Functionally, catalyzes the dephosphorylation of undecaprenyl diphosphate (UPP). Confers resistance to bacitracin. This Rhizobium johnstonii (strain DSM 114642 / LMG 32736 / 3841) (Rhizobium leguminosarum bv. viciae) protein is Undecaprenyl-diphosphatase.